Reading from the N-terminus, the 406-residue chain is Argininosuccinate synthase (406 aa).

ATP-binding positions include 12-20 (AYSGGLDTS) and Ala39. Residues Tyr90 and Ser95 each contribute to the L-citrulline site. Gly120 is an ATP binding site. Thr122, Asn126, and Asp127 together coordinate L-aspartate. Asn126 contacts L-citrulline. L-citrulline is bound by residues Arg130, Ser179, Ser188, Glu264, and Tyr276.

It belongs to the argininosuccinate synthase family. Type 1 subfamily. In terms of assembly, homotetramer.

The protein resides in the cytoplasm. The catalysed reaction is L-citrulline + L-aspartate + ATP = 2-(N(omega)-L-arginino)succinate + AMP + diphosphate + H(+). It participates in amino-acid biosynthesis; L-arginine biosynthesis; L-arginine from L-ornithine and carbamoyl phosphate: step 2/3. This chain is Argininosuccinate synthase, found in Geotalea daltonii (strain DSM 22248 / JCM 15807 / FRC-32) (Geobacter daltonii).